Consider the following 648-residue polypeptide: Copper methylamine oxidase (648 aa).

A propeptide spanning residues 1 to 9 (MTLNAESEA) is cleaved from the precursor. Position 299–310 (299–310 (AFDSGEYNIGNM)) interacts with substrate. Catalysis depends on Asp301, which acts as the Proton acceptor. A disulfide bridge connects residues Cys320 and Cys346. 382–387 (VANYEY) is a binding site for substrate. Tyr385 (schiff-base intermediate with substrate; via topaquinone) is an active-site residue. Tyr385 carries the 2',4',5'-topaquinone modification. Cu cation contacts are provided by His436 and His438. Residues Asp445, Phe446, and Asp584 each contribute to the Mn(2+) site. His595 lines the Cu cation pocket. The tract at residues 629–648 (PTSTSTTQTGEADTCCHTDK) is disordered.

It belongs to the copper/topaquinone oxidase family. In terms of assembly, homodimer. Cu cation is required as a cofactor. Requires Zn(2+) as cofactor. L-topaquinone serves as cofactor. The cofactor is Mn(2+). Post-translationally, topaquinone (TPQ) is generated by copper-dependent autoxidation of a specific tyrosyl residue.

It catalyses the reaction a primary methyl amine + O2 + H2O = an aldehyde + H2O2 + NH4(+). This chain is Copper methylamine oxidase (maoII), found in Arthrobacter sp. (strain P1).